Here is a 509-residue protein sequence, read N- to C-terminus: Meiotic fizzy-related protein 2 (509 aa).

WD repeat units follow at residues 159–196, 199–238, 242–281, 287–326, 329–371, and 437–477; these read LDDF…SIME, PTTY…NRCD, HHDG…MRRV, VHQE…NKKF, IHLA…RIHS, and IHTH…QEIH.

This sequence belongs to the WD repeat CDC20/Fizzy family.

It localises to the nucleus. In terms of biological role, has a role in meiosis. This chain is Meiotic fizzy-related protein 2 (mfr2), found in Schizosaccharomyces pombe (strain 972 / ATCC 24843) (Fission yeast).